A 114-amino-acid polypeptide reads, in one-letter code: Small ribosomal subunit protein uS17 (114 aa).

This sequence belongs to the universal ribosomal protein uS17 family. As to quaternary structure, part of the 30S ribosomal subunit.

One of the primary rRNA binding proteins, it binds specifically to the 5'-end of 16S ribosomal RNA. This chain is Small ribosomal subunit protein uS17, found in Sulfolobus acidocaldarius (strain ATCC 33909 / DSM 639 / JCM 8929 / NBRC 15157 / NCIMB 11770).